The following is a 639-amino-acid chain: UvrABC system protein C (639 aa).

In terms of domain architecture, GIY-YIG spans 20–97 (ERSGVYRMFD…IKKFQPKFNI (78 aa)). Residues 207–242 (KELQENLSRKMEELSSQMRFEEAAEIRDRIKALSYV) form the UVR domain.

This sequence belongs to the UvrC family. Interacts with UvrB in an incision complex.

Its subcellular location is the cytoplasm. Its function is as follows. The UvrABC repair system catalyzes the recognition and processing of DNA lesions. UvrC both incises the 5' and 3' sides of the lesion. The N-terminal half is responsible for the 3' incision and the C-terminal half is responsible for the 5' incision. This is UvrABC system protein C from Rickettsia conorii (strain ATCC VR-613 / Malish 7).